Reading from the N-terminus, the 227-residue chain is Cytochrome c oxidase subunit 2 (227 aa).

At 1–14 (MAHAAQVGLQDATS) the chain is on the mitochondrial intermembrane side. The chain crosses the membrane as a helical span at residues 15-45 (PIMEELIIFHDHALMIIFLICFLVLYALFLT). The Mitochondrial matrix segment spans residues 46 to 59 (LTTKLTNTSISDAQ). A helical membrane pass occupies residues 60-87 (EMETVWTILPAIILVLIALPSLRILYMT). At 88–227 (DEVNDPSFTI…IFEMGPVFTL (140 aa)) the chain is on the mitochondrial intermembrane side. 6 residues coordinate Cu cation: His-161, Cys-196, Glu-198, Cys-200, His-204, and Met-207. Glu-198 contacts Mg(2+).

It belongs to the cytochrome c oxidase subunit 2 family. As to quaternary structure, component of the cytochrome c oxidase (complex IV, CIV), a multisubunit enzyme composed of 14 subunits. The complex is composed of a catalytic core of 3 subunits MT-CO1, MT-CO2 and MT-CO3, encoded in the mitochondrial DNA, and 11 supernumerary subunits COX4I, COX5A, COX5B, COX6A, COX6B, COX6C, COX7A, COX7B, COX7C, COX8 and NDUFA4, which are encoded in the nuclear genome. The complex exists as a monomer or a dimer and forms supercomplexes (SCs) in the inner mitochondrial membrane with NADH-ubiquinone oxidoreductase (complex I, CI) and ubiquinol-cytochrome c oxidoreductase (cytochrome b-c1 complex, complex III, CIII), resulting in different assemblies (supercomplex SCI(1)III(2)IV(1) and megacomplex MCI(2)III(2)IV(2)). Found in a complex with TMEM177, COA6, COX18, COX20, SCO1 and SCO2. Interacts with TMEM177 in a COX20-dependent manner. Interacts with COX20. Interacts with COX16. The cofactor is Cu cation.

It localises to the mitochondrion inner membrane. The catalysed reaction is 4 Fe(II)-[cytochrome c] + O2 + 8 H(+)(in) = 4 Fe(III)-[cytochrome c] + 2 H2O + 4 H(+)(out). Its function is as follows. Component of the cytochrome c oxidase, the last enzyme in the mitochondrial electron transport chain which drives oxidative phosphorylation. The respiratory chain contains 3 multisubunit complexes succinate dehydrogenase (complex II, CII), ubiquinol-cytochrome c oxidoreductase (cytochrome b-c1 complex, complex III, CIII) and cytochrome c oxidase (complex IV, CIV), that cooperate to transfer electrons derived from NADH and succinate to molecular oxygen, creating an electrochemical gradient over the inner membrane that drives transmembrane transport and the ATP synthase. Cytochrome c oxidase is the component of the respiratory chain that catalyzes the reduction of oxygen to water. Electrons originating from reduced cytochrome c in the intermembrane space (IMS) are transferred via the dinuclear copper A center (CU(A)) of subunit 2 and heme A of subunit 1 to the active site in subunit 1, a binuclear center (BNC) formed by heme A3 and copper B (CU(B)). The BNC reduces molecular oxygen to 2 water molecules using 4 electrons from cytochrome c in the IMS and 4 protons from the mitochondrial matrix. The protein is Cytochrome c oxidase subunit 2 (MT-CO2) of Pan troglodytes (Chimpanzee).